A 276-amino-acid chain; its full sequence is Replication protein A 32 kDa subunit-A (276 aa).

The span at 19 to 31 (GGGGYMQSPGGFG) shows a compositional bias: gly residues. The tract at residues 19-47 (GGGGYMQSPGGFGSPAPTQGEKKSRSRSQ) is disordered. A DNA-binding region (OB) is located at residues 77 to 151 (VTIVGIVRHA…KSVVAFKIAP (75 aa)).

It belongs to the replication factor A protein 2 family. Component of the replication protein A complex (RPA/RP-A), a heterotrimeric complex composed of RPA1, RPA2 and RPA3. Post-translationally, differentially phosphorylated throughout the cell cycle, becoming phosphorylated at the G1-S transition and dephosphorylated in late mitosis. Phosphorylation increases upon replication fork stalling.

The protein localises to the nucleus. It localises to the PML body. Its function is as follows. As part of the heterotrimeric replication protein A complex (RPA/RP-A), binds and stabilizes single-stranded DNA intermediates, that form during DNA replication or upon DNA stress. It prevents their reannealing and in parallel, recruits and activates different proteins and complexes involved in DNA metabolism. Thereby, it plays an essential role both in DNA replication and the cellular response to DNA damage. This Xenopus laevis (African clawed frog) protein is Replication protein A 32 kDa subunit-A (rpa2-a).